Reading from the N-terminus, the 233-residue chain is tRNA (guanine-N(7)-)-methyltransferase (233 aa).

Glutamate 62, glutamate 87, aspartate 114, and aspartate 136 together coordinate S-adenosyl-L-methionine. The active site involves aspartate 136. Residues lysine 140, aspartate 172, and 211-214 (TRYE) contribute to the substrate site.

This sequence belongs to the class I-like SAM-binding methyltransferase superfamily. TrmB family.

It carries out the reaction guanosine(46) in tRNA + S-adenosyl-L-methionine = N(7)-methylguanosine(46) in tRNA + S-adenosyl-L-homocysteine. The protein operates within tRNA modification; N(7)-methylguanine-tRNA biosynthesis. In terms of biological role, catalyzes the formation of N(7)-methylguanine at position 46 (m7G46) in tRNA. The sequence is that of tRNA (guanine-N(7)-)-methyltransferase from Erythrobacter litoralis (strain HTCC2594).